We begin with the raw amino-acid sequence, 262 residues long: Small ribosomal subunit protein uS2 (262 aa).

The interval lysine 225–glutamate 262 is disordered. Positions glutamate 232–glutamate 262 are enriched in basic and acidic residues.

This sequence belongs to the universal ribosomal protein uS2 family.

The chain is Small ribosomal subunit protein uS2 from Halothermothrix orenii (strain H 168 / OCM 544 / DSM 9562).